A 337-amino-acid chain; its full sequence is Glyceraldehyde-3-phosphate dehydrogenase (337 aa).

Residues 11–12 and Gly111 contribute to the NAD(+) site; that span reads TI. 140 to 142 is a binding site for D-glyceraldehyde 3-phosphate; sequence SCN. The Nucleophile role is filled by Cys141. Arg169 serves as a coordination point for NAD(+). The disordered stretch occupies residues 177-196; that stretch reads KKGPINSIVPTTEVPSHHGP. Residue 194-195 participates in D-glyceraldehyde 3-phosphate binding; sequence HG. Gln301 serves as a coordination point for NAD(+).

Belongs to the glyceraldehyde-3-phosphate dehydrogenase family. As to quaternary structure, homotetramer.

It is found in the cytoplasm. The catalysed reaction is D-glyceraldehyde 3-phosphate + phosphate + NADP(+) = (2R)-3-phospho-glyceroyl phosphate + NADPH + H(+). It carries out the reaction D-glyceraldehyde 3-phosphate + phosphate + NAD(+) = (2R)-3-phospho-glyceroyl phosphate + NADH + H(+). The protein operates within carbohydrate degradation; glycolysis; pyruvate from D-glyceraldehyde 3-phosphate: step 1/5. The sequence is that of Glyceraldehyde-3-phosphate dehydrogenase from Methanosphaera stadtmanae (strain ATCC 43021 / DSM 3091 / JCM 11832 / MCB-3).